Reading from the N-terminus, the 263-residue chain is Receptor-transporting protein 1 (263 aa).

Residues 1 to 238 (MRIFRPWRLR…ETGSGCNFCS (238 aa)) lie on the Cytoplasmic side of the membrane. A 3CxxC-type zinc finger spans residues 88–197 (ASGRFHCSWC…GEFCEACQEG (110 aa)). The helical transmembrane segment at 239 to 259 (IPWCLFWATVLMLIIYLQFSF) threads the bilayer. The Extracellular segment spans residues 260–263 (RTSV).

Belongs to the TMEM7 family. Interacts with olfactory receptors. In terms of tissue distribution, predominantly expressed in olfactory and vomeronasal organs, in mature olfactory sensory neurons.

It localises to the cell membrane. Its function is as follows. Specifically promotes functional cell surface expression of olfactory receptors, but not of other GPCRs. This chain is Receptor-transporting protein 1 (Rtp1), found in Mus musculus (Mouse).